The sequence spans 488 residues: GTPase Der (488 aa).

Residues P3–L166 enclose the EngA-type G 1 domain. GTP is bound by residues G9–S16, D56–I60, and N118–D121. Residues L168 to Q192 are disordered. A compositionally biased stretch (acidic residues) spans G172 to A190. Residues I200–T373 form the EngA-type G 2 domain. GTP is bound by residues G206–S213, D253–V257, and N318–D321. The region spanning R374–D458 is the KH-like domain.

It belongs to the TRAFAC class TrmE-Era-EngA-EngB-Septin-like GTPase superfamily. EngA (Der) GTPase family. As to quaternary structure, associates with the 50S ribosomal subunit.

Its function is as follows. GTPase that plays an essential role in the late steps of ribosome biogenesis. The chain is GTPase Der from Shewanella woodyi (strain ATCC 51908 / MS32).